Here is a 429-residue protein sequence, read N- to C-terminus: Glutamate-1-semialdehyde 2,1-aminomutase (429 aa).

Lysine 265 is subject to N6-(pyridoxal phosphate)lysine.

Belongs to the class-III pyridoxal-phosphate-dependent aminotransferase family. HemL subfamily. As to quaternary structure, homodimer. It depends on pyridoxal 5'-phosphate as a cofactor.

The protein localises to the cytoplasm. It catalyses the reaction (S)-4-amino-5-oxopentanoate = 5-aminolevulinate. It functions in the pathway porphyrin-containing compound metabolism; protoporphyrin-IX biosynthesis; 5-aminolevulinate from L-glutamyl-tRNA(Glu): step 2/2. The sequence is that of Glutamate-1-semialdehyde 2,1-aminomutase from Ectopseudomonas mendocina (strain ymp) (Pseudomonas mendocina).